The primary structure comprises 215 residues: Large ribosomal subunit protein uL3 (215 aa).

Residues 136 to 155 (GVSISHRSHGSTGQRQDPGK) are disordered. At glutamine 151 the chain carries N5-methylglutamine.

It belongs to the universal ribosomal protein uL3 family. As to quaternary structure, part of the 50S ribosomal subunit. Forms a cluster with proteins L14 and L19. Post-translationally, methylated by PrmB.

One of the primary rRNA binding proteins, it binds directly near the 3'-end of the 23S rRNA, where it nucleates assembly of the 50S subunit. The protein is Large ribosomal subunit protein uL3 of Rickettsia africae (strain ESF-5).